Reading from the N-terminus, the 273-residue chain is Pantothenate synthetase (273 aa).

27–34 (MGALHDGH) is an ATP binding site. Residue H34 is the Proton donor of the active site. Q58 contacts (R)-pantoate. Q58 serves as a coordination point for beta-alanine. 144–147 (GKKD) serves as a coordination point for ATP. A (R)-pantoate-binding site is contributed by Q150. ATP is bound by residues V173 and 181–184 (LSSR).

Belongs to the pantothenate synthetase family. Homodimer.

The protein resides in the cytoplasm. The catalysed reaction is (R)-pantoate + beta-alanine + ATP = (R)-pantothenate + AMP + diphosphate + H(+). It participates in cofactor biosynthesis; (R)-pantothenate biosynthesis; (R)-pantothenate from (R)-pantoate and beta-alanine: step 1/1. Its function is as follows. Catalyzes the condensation of pantoate with beta-alanine in an ATP-dependent reaction via a pantoyl-adenylate intermediate. This is Pantothenate synthetase from Campylobacter curvus (strain 525.92).